The primary structure comprises 389 residues: Mannitol-1-phosphate 5-dehydrogenase (389 aa).

5 to 16 (AVHFGAGNIGRG) contributes to the NAD(+) binding site. The active site involves lysine 215.

Belongs to the mannitol dehydrogenase family. In terms of assembly, monomer.

It catalyses the reaction D-mannitol 1-phosphate + NAD(+) = beta-D-fructose 6-phosphate + NADH + H(+). Its function is as follows. Catalyzes the NAD(H)-dependent interconversion of D-fructose 6-phosphate and D-mannitol 1-phosphate in the mannitol metabolic pathway. The sequence is that of Mannitol-1-phosphate 5-dehydrogenase from Sclerotinia sclerotiorum (strain ATCC 18683 / 1980 / Ss-1) (White mold).